Reading from the N-terminus, the 165-residue chain is UPF0303 protein Bcep1808_1522 (165 aa).

It belongs to the UPF0303 family.

The protein is UPF0303 protein Bcep1808_1522 of Burkholderia vietnamiensis (strain G4 / LMG 22486) (Burkholderia cepacia (strain R1808)).